Here is a 61-residue protein sequence, read N- to C-terminus: Large ribosomal subunit protein uL30 (61 aa).

This sequence belongs to the universal ribosomal protein uL30 family. Part of the 50S ribosomal subunit.

This Methylococcus capsulatus (strain ATCC 33009 / NCIMB 11132 / Bath) protein is Large ribosomal subunit protein uL30.